Here is a 258-residue protein sequence, read N- to C-terminus: Trifolitoxin-processing protein TfxF (258 aa).

Its function is as follows. The actions of the proteins TfxB, TfxD and TfxF are implicated in the processing of the inactive trifolitoxin (TfxA) precursor into the active peptide. The polypeptide is Trifolitoxin-processing protein TfxF (tfxF) (Rhizobium leguminosarum bv. trifolii).